Here is a 147-residue protein sequence, read N- to C-terminus: Hemoglobin subunit beta (147 aa).

The residue at position 2 (V2) is an N-acetylvaline. In terms of domain architecture, Globin spans 3 to 147; sequence HLTAEEKAAV…VATALAHKYH (145 aa). The residue at position 13 (T13) is a Phosphothreonine. S45 carries the phosphoserine modification. The residue at position 60 (K60) is an N6-acetyllysine. Position 64 (H64) interacts with heme b. K83 carries the N6-acetyllysine modification. Position 93 (H93) interacts with heme b. C94 is modified (S-nitrosocysteine). K145 is modified (N6-acetyllysine).

Belongs to the globin family. Heterotetramer of two alpha chains and two beta chains. As to expression, red blood cells.

Involved in oxygen transport from the lung to the various peripheral tissues. The polypeptide is Hemoglobin subunit beta (HBB) (Carlito syrichta (Philippine tarsier)).